The primary structure comprises 213 residues: CASP-like protein 2A1 (213 aa).

Residues 1–41 (MSKMAEEKAAAVGGLGGAGAADAAQQQQLAAGEAAAARVRP) lie on the Cytoplasmic side of the membrane. The helical transmembrane segment at 42 to 62 (VETLLRAAPLGLCVAAMTVML) threads the bilayer. Residues 63-83 (RNQQSNEYGAVAYSDLGGFKY) are Extracellular-facing. The chain crosses the membrane as a helical span at residues 84-104 (LVYANGLCAAYSLVSAFYTAV). The Cytoplasmic segment spans residues 105–113 (PRPATVSRS). A helical transmembrane segment spans residues 114-134 (WLVFLLDQVFTYLILAAGAAA). Residues 135 to 166 (AELLYLAYNGDKEVTWSEACGVFGSFCRQART) are Extracellular-facing. The chain crosses the membrane as a helical span at residues 167 to 187 (SVAITFGTVLCFILLSLISSY). Residues 188-213 (RLFSAYEAPPSSALGSKGVEIAAYPR) lie on the Cytoplasmic side of the membrane.

The protein belongs to the Casparian strip membrane proteins (CASP) family. In terms of assembly, homodimer and heterodimers.

Its subcellular location is the cell membrane. The polypeptide is CASP-like protein 2A1 (Zea mays (Maize)).